Consider the following 768-residue polypeptide: Phosphoribosylformylglycinamidine synthase subunit PurL (768 aa).

His-53 is a catalytic residue. Position 56 (Tyr-56) interacts with ATP. Glu-98 contacts Mg(2+). Substrate contacts are provided by residues 99-102 (SHNH) and Arg-121. Residue His-100 is the Proton acceptor of the active site. Mg(2+) is bound at residue Asp-122. Substrate is bound at residue Gln-253. Asp-285 provides a ligand contact to Mg(2+). Residue 328–330 (ETQ) coordinates substrate. Residues Asp-516 and Gly-561 each contribute to the ATP site. Position 562 (Asn-562) interacts with Mg(2+). Residue Ser-564 participates in substrate binding.

Belongs to the FGAMS family. Monomer. Part of the FGAM synthase complex composed of 1 PurL, 1 PurQ and 2 PurS subunits.

It localises to the cytoplasm. It carries out the reaction N(2)-formyl-N(1)-(5-phospho-beta-D-ribosyl)glycinamide + L-glutamine + ATP + H2O = 2-formamido-N(1)-(5-O-phospho-beta-D-ribosyl)acetamidine + L-glutamate + ADP + phosphate + H(+). It participates in purine metabolism; IMP biosynthesis via de novo pathway; 5-amino-1-(5-phospho-D-ribosyl)imidazole from N(2)-formyl-N(1)-(5-phospho-D-ribosyl)glycinamide: step 1/2. Functionally, part of the phosphoribosylformylglycinamidine synthase complex involved in the purines biosynthetic pathway. Catalyzes the ATP-dependent conversion of formylglycinamide ribonucleotide (FGAR) and glutamine to yield formylglycinamidine ribonucleotide (FGAM) and glutamate. The FGAM synthase complex is composed of three subunits. PurQ produces an ammonia molecule by converting glutamine to glutamate. PurL transfers the ammonia molecule to FGAR to form FGAM in an ATP-dependent manner. PurS interacts with PurQ and PurL and is thought to assist in the transfer of the ammonia molecule from PurQ to PurL. In Methanothrix thermoacetophila (strain DSM 6194 / JCM 14653 / NBRC 101360 / PT) (Methanosaeta thermophila), this protein is Phosphoribosylformylglycinamidine synthase subunit PurL.